We begin with the raw amino-acid sequence, 278 residues long: S-methyl-5'-thioadenosine phosphorylase (278 aa).

Residues Ser-13, 55–56, and 88–89 contribute to the phosphate site; these read RH and TA. Met-190 contributes to the substrate binding site. Thr-191 serves as a coordination point for phosphate. 214 to 216 is a binding site for substrate; the sequence is DYD.

It belongs to the PNP/MTAP phosphorylase family. MTAP subfamily. As to quaternary structure, homotrimer.

The protein localises to the cytoplasm. Its subcellular location is the nucleus. It carries out the reaction S-methyl-5'-thioadenosine + phosphate = 5-(methylsulfanyl)-alpha-D-ribose 1-phosphate + adenine. Its pathway is amino-acid biosynthesis; L-methionine biosynthesis via salvage pathway; S-methyl-5-thio-alpha-D-ribose 1-phosphate from S-methyl-5'-thioadenosine (phosphorylase route): step 1/1. Catalyzes the reversible phosphorylation of S-methyl-5'-thioadenosine (MTA) to adenine and 5-methylthioribose-1-phosphate. Involved in the breakdown of MTA, a major by-product of polyamine biosynthesis. Responsible for the first step in the methionine salvage pathway after MTA has been generated from S-adenosylmethionine. Has broad substrate specificity with 6-aminopurine nucleosides as preferred substrates. The protein is S-methyl-5'-thioadenosine phosphorylase of Anopheles gambiae (African malaria mosquito).